Consider the following 252-residue polypeptide: Pyrroloquinoline-quinone synthase (252 aa).

The protein belongs to the PqqC family.

It carries out the reaction 6-(2-amino-2-carboxyethyl)-7,8-dioxo-1,2,3,4,7,8-hexahydroquinoline-2,4-dicarboxylate + 3 O2 = pyrroloquinoline quinone + 2 H2O2 + 2 H2O + H(+). It functions in the pathway cofactor biosynthesis; pyrroloquinoline quinone biosynthesis. Functionally, ring cyclization and eight-electron oxidation of 3a-(2-amino-2-carboxyethyl)-4,5-dioxo-4,5,6,7,8,9-hexahydroquinoline-7,9-dicarboxylic-acid to PQQ. The chain is Pyrroloquinoline-quinone synthase from Acinetobacter baumannii (strain AB307-0294).